The primary structure comprises 398 residues: Fructose-bisphosphate aldolase 2, chloroplastic (398 aa).

The N-terminal 46 residues, 1-46, are a transit peptide targeting the chloroplast; sequence MASTSLLKASPVLDKSEWVKGQSVLFRQPSSASVVLRNRATSLTVR. Residue arginine 95 participates in substrate binding. At serine 157 the chain carries Phosphoserine. A substrate-binding site is contributed by lysine 185. Position 215 is a phosphoserine (serine 215). Glutamate 225 serves as the catalytic Proton acceptor. Lysine 267 (schiff-base intermediate with dihydroxyacetone-P) is an active-site residue. 309-311 lines the substrate pocket; it reads SGG. Lysine 394 is subject to N6,N6,N6-trimethyllysine.

The protein belongs to the class I fructose-bisphosphate aldolase family. In terms of assembly, homotetramer. In terms of processing, can be trimethylated at Lys-394 by LSMT-L. The methylation level has no influence on the ologomerization state or on the kinetic properties of the enzyme. Post-translationally, phosphorylated on tyrosine residues in response to abscisic acid (ABA) in germinating seeds. In terms of tissue distribution, highly expressed in rosettes leaves.

It is found in the plastid. The protein localises to the chloroplast. Its subcellular location is the plastoglobule. It localises to the chloroplast stroma. It carries out the reaction beta-D-fructose 1,6-bisphosphate = D-glyceraldehyde 3-phosphate + dihydroxyacetone phosphate. The protein operates within carbohydrate degradation; glycolysis; D-glyceraldehyde 3-phosphate and glycerone phosphate from D-glucose: step 4/4. In terms of biological role, plays a key role in glycolysis and gluconeogenesis. This Arabidopsis thaliana (Mouse-ear cress) protein is Fructose-bisphosphate aldolase 2, chloroplastic.